A 181-amino-acid polypeptide reads, in one-letter code: Large ribosomal subunit protein uL16 (181 aa).

This sequence belongs to the universal ribosomal protein uL16 family. As to quaternary structure, part of the 50S ribosomal subunit.

In Pyrococcus furiosus (strain ATCC 43587 / DSM 3638 / JCM 8422 / Vc1), this protein is Large ribosomal subunit protein uL16.